The sequence spans 240 residues: Fibronectin type III domain-containing protein 5 (240 aa).

The span at 1–10 (MQAARGGAGR) shows a compositional bias: gly residues. Positions 1–33 (MQAARGGAGRPGREGRGLERECERSPGPGVAMP) are disordered. Residues 11–24 (PGREGRGLERECER) are compositionally biased toward basic and acidic residues. Positions 64–155 (APVNVTVRHL…EPVLFKTPRE (92 aa)) constitute a Fibronectin type-III domain. Residues Asn67 and Asn112 are each glycosylated (N-linked (GlcNAc...) asparagine). The chain crosses the membrane as a helical span at residues 181–201 (GEVLIIVVVLFMWAGVIALFC). Over residues 210–221 (NEPNNNKEKTKS) the composition is skewed to basic and acidic residues. The tract at residues 210-240 (NEPNNNKEKTKSASETSTPEHQGGGLLRSKI) is disordered. Residues 231–240 (QGGGLLRSKI) show a composition bias toward gly residues. Residues 238–240 (SKI) carry the Microbody targeting signal motif.

As to quaternary structure, dimer; may exist in other oligomeric forms. In terms of processing, the extracellular domain is cleaved and released from the cell membrane. N-Glycosylated. As to expression, in adult, it is highly expressed in skeletal muscle, heart and brain.

The protein resides in the cell membrane. It localises to the peroxisome membrane. Its subcellular location is the secreted. Its function is as follows. Mediates beneficial effects of muscular exercise. Induces browning of white adipose tissue by stimulating UCP1 expression, at least in part, via the nuclear receptor PPARA. The chain is Fibronectin type III domain-containing protein 5 (Fndc5) from Mus musculus (Mouse).